The sequence spans 230 residues: Protein-L-isoaspartate O-methyltransferase 1 (230 aa).

Residue serine 65 is part of the active site.

It belongs to the methyltransferase superfamily. L-isoaspartyl/D-aspartyl protein methyltransferase family. In terms of assembly, monomer. As to expression, expressed in roots, rosette leaves, stems, cauline leaves, flowers and developing seeds.

It is found in the cytoplasm. The catalysed reaction is [protein]-L-isoaspartate + S-adenosyl-L-methionine = [protein]-L-isoaspartate alpha-methyl ester + S-adenosyl-L-homocysteine. Functionally, catalyzes the methyl esterification of L-isoaspartyl residues in peptides and proteins that result from spontaneous decomposition of normal L-aspartyl and L-asparaginyl residues. It plays a role in the repair and/or degradation of damaged proteins. Contributes to seed longevity and germination vigor by limiting the abnormal accumulation of the L-isoaspartyl residues in seed proteins. This chain is Protein-L-isoaspartate O-methyltransferase 1 (PIMT1), found in Arabidopsis thaliana (Mouse-ear cress).